We begin with the raw amino-acid sequence, 120 residues long: Large ribosomal subunit protein uL18 (120 aa).

The protein belongs to the universal ribosomal protein uL18 family. As to quaternary structure, part of the 50S ribosomal subunit; part of the 5S rRNA/L5/L18/L25 subcomplex. Contacts the 5S and 23S rRNAs.

Its function is as follows. This is one of the proteins that bind and probably mediate the attachment of the 5S RNA into the large ribosomal subunit, where it forms part of the central protuberance. The polypeptide is Large ribosomal subunit protein uL18 (Nitrobacter winogradskyi (strain ATCC 25391 / DSM 10237 / CIP 104748 / NCIMB 11846 / Nb-255)).